We begin with the raw amino-acid sequence, 590 residues long: Muscarinic acetylcholine receptor M3 (590 aa).

The Extracellular portion of the chain corresponds to Met-1–Gln-67. Asn-6, Asn-7, Asn-15, Asn-41, Asn-48, and Asn-53 each carry an N-linked (GlcNAc...) asparagine glycan. The chain crosses the membrane as a helical span at residues Val-68–Val-91. Residues Ala-92–Asn-104 are Cytoplasmic-facing. The chain crosses the membrane as a helical span at residues Tyr-105–Phe-125. The Extracellular segment spans residues Thr-126 to Asp-142. A disulfide bridge connects residues Cys-141 and Cys-221. The helical transmembrane segment at Leu-143 to Phe-164 threads the bilayer. The Cytoplasmic segment spans residues Asp-165–Arg-184. The helical transmembrane segment at Ala-185 to Trp-207 threads the bilayer. Topologically, residues Gln-208 to Pro-229 are extracellular. Residues Thr-230 to Trp-252 form a helical membrane-spanning segment. The Cytoplasmic portion of the chain corresponds to Arg-253–Thr-492. Residues Ala-275–Val-281 carry the Basolateral sorting signal motif. Positions Ala-324–Ile-357 are disordered. Low complexity predominate over residues Ser-334–Ser-345. Ser-385 bears the Phosphoserine mark. A disordered region spans residues Ser-398–Ser-419. Over residues Lys-407–Ser-419 the composition is skewed to polar residues. Residues Leu-493–Val-513 traverse the membrane as a helical segment. Residues Asn-514–Asn-527 lie on the Extracellular side of the membrane. Residues Leu-528–Cys-547 traverse the membrane as a helical segment. The Cytoplasmic portion of the chain corresponds to Asn-548–Leu-590.

This sequence belongs to the G-protein coupled receptor 1 family. Muscarinic acetylcholine receptor subfamily. CHRM3 sub-subfamily. In terms of assembly, homodimer; the dimers can form tetramers. Interacts with NALCN. Interacts with TMEM147.

The protein localises to the cell membrane. The protein resides in the postsynaptic cell membrane. Its subcellular location is the basolateral cell membrane. It is found in the endoplasmic reticulum membrane. The muscarinic acetylcholine receptor mediates various cellular responses, including inhibition of adenylate cyclase, breakdown of phosphoinositides and modulation of potassium channels through the action of G proteins. Primary transducing effect is Pi turnover. The chain is Muscarinic acetylcholine receptor M3 (CHRM3) from Bos taurus (Bovine).